A 623-amino-acid polypeptide reads, in one-letter code: Riboflavin biosynthesis protein PYRR, chloroplastic (623 aa).

The transit peptide at methionine 1–proline 45 directs the protein to the chloroplast. One can recognise a CMP/dCMP-type deaminase domain in the interval alanine 52–aspartate 181.

It in the C-terminal section; belongs to the YbiA family.

Its subcellular location is the plastid. It localises to the chloroplast. The catalysed reaction is 5-amino-6-(5-phospho-D-ribitylamino)uracil + NADP(+) = 5-amino-6-(5-phospho-D-ribosylamino)uracil + NADPH + H(+). The enzyme catalyses 2,5-diamino-6-hydroxy-4-(5-phosphoribosylamino)-pyrimidine + H2O = 2,5,6-triamino-4-hydroxypyrimidine + D-ribose 5-phosphate. It catalyses the reaction 5-amino-6-(5-phospho-D-ribosylamino)uracil + H2O = 5,6-diaminouracil + D-ribose 5-phosphate. It functions in the pathway cofactor biosynthesis; riboflavin biosynthesis; 5-amino-6-(D-ribitylamino)uracil from GTP: step 3/4. Its function is as follows. Pyrimidine reductase involved in the riboflavin biosynthesis pathway. Also has a non-functional N-terminal deaminase domain that lacks the catalytically essential zinc-binding residues. 39% activity when NADH replaces NADPH. No evidence for a phosphatase activity conferred by the N-terminal domain. In terms of biological role, catalyzes the hydrolysis of the N-glycosidic bond in the first two intermediates of riboflavin biosynthesis, which are highly reactive metabolites, yielding relatively innocuous products. Thus, can divert a surplus of harmful intermediates into relatively harmless products and pre-empt the damage these intermediates would otherwise do. Has no activity against GTP, nucleoside monophosphates or ADP-ribose. This Zea mays (Maize) protein is Riboflavin biosynthesis protein PYRR, chloroplastic (PYRR).